A 55-amino-acid chain; its full sequence is UPF0391 membrane protein Neut_2351/Neut_2360 (55 aa).

The next 2 membrane-spanning stretches (helical) occupy residues 4–24 and 28–48; these read LAVVFLIIAVIAALLGVTGVA and AEMAWILFVIGIVLAIVFWVL.

It belongs to the UPF0391 family.

Its subcellular location is the cell membrane. This is UPF0391 membrane protein Neut_2351/Neut_2360 from Nitrosomonas eutropha (strain DSM 101675 / C91 / Nm57).